A 162-amino-acid polypeptide reads, in one-letter code: N5-carboxyaminoimidazole ribonucleotide mutase (162 aa).

Residues S11, D14, and R41 each contribute to the substrate site.

This sequence belongs to the AIR carboxylase family. Class I subfamily.

The enzyme catalyses 5-carboxyamino-1-(5-phospho-D-ribosyl)imidazole + H(+) = 5-amino-1-(5-phospho-D-ribosyl)imidazole-4-carboxylate. It participates in purine metabolism; IMP biosynthesis via de novo pathway; 5-amino-1-(5-phospho-D-ribosyl)imidazole-4-carboxylate from 5-amino-1-(5-phospho-D-ribosyl)imidazole (N5-CAIR route): step 2/2. Functionally, catalyzes the conversion of N5-carboxyaminoimidazole ribonucleotide (N5-CAIR) to 4-carboxy-5-aminoimidazole ribonucleotide (CAIR). In Brucella melitensis biotype 1 (strain ATCC 23456 / CCUG 17765 / NCTC 10094 / 16M), this protein is N5-carboxyaminoimidazole ribonucleotide mutase.